Consider the following 634-residue polypeptide: Growth hormone receptor (634 aa).

Residues 1–18 (MDLWQLLLTLAVAGSSDA) form the signal peptide. Residues 19-260 (FSGSEATPAF…NPSACEEDFQ (242 aa)) are Extracellular-facing. Residue asparagine 46 is glycosylated (N-linked (GlcNAc...) asparagine). A disulfide bond links cysteine 56 and cysteine 66. N-linked (GlcNAc...) asparagine glycosylation is present at asparagine 73. Residues cysteine 97 and cysteine 108 are joined by a disulfide bond. Asparagine 111 carries N-linked (GlcNAc...) asparagine glycosylation. An intrachain disulfide couples cysteine 122 to cysteine 136. In terms of domain architecture, Fibronectin type-III spans 147 to 250 (PPVGLNWTLL…EVLLITFPQM (104 aa)). 3 N-linked (GlcNAc...) asparagine glycosylation sites follow: asparagine 152, asparagine 157, and asparagine 196. A WSXWS motif motif is present at residues 236-240 (YGKFS). Residues 261 to 284 (FPWFLIIIFGILGLAVTLYLLIFS) form a helical membrane-spanning segment. The Cytoplasmic portion of the chain corresponds to 285 to 634 (KQQRIKMLIL…STDQLNKIMP (350 aa)). Positions 290 to 375 (KMLILPPVPV…HEKSLNIFGA (86 aa)) are required for JAK2 binding. Residues 293–301 (ILPPVPVPK) carry the Box 1 motif motif. A UbE motif motif is present at residues 336 to 345 (DSWVEFIELD). A Phosphoserine modification is found at serine 337.

It belongs to the type I cytokine receptor family. Type 1 subfamily. On growth hormone (GH) binding, forms homodimers and binds JAK2 via a box 1-containing domain. In terms of processing, the soluble form (GHBP) is produced by phorbol ester-promoted proteolytic cleavage at the cell surface (shedding) by ADAM17/TACE. Shedding is inhibited by growth hormone (GH) binding to the receptor probably due to a conformational change in GHR rendering the receptor inaccessible to ADAM17. On GH binding, phosphorylated on tyrosine residues in the cytoplasmic domain by JAK2. Post-translationally, ubiquitinated by the ECS(SOCS2) complex following ligand-binding and phosphorylation by JAK2, leading to its degradation by the proteasome. Regulation by the ECS(SOCS2) complex acts as a negative feedback loop of growth hormone receptor signaling. Ubiquitination is not sufficient for GHR internalization.

The protein localises to the cell membrane. It localises to the secreted. In terms of biological role, receptor for pituitary gland growth hormone (GH1) involved in regulating postnatal body growth. On ligand binding, couples to the JAK2/STAT5 pathway. Its function is as follows. The soluble form (GHBP) acts as a reservoir of growth hormone in plasma and may be a modulator/inhibitor of GH signaling. The sequence is that of Growth hormone receptor (GHR) from Bos taurus (Bovine).